Here is a 372-residue protein sequence, read N- to C-terminus: Silphinene synthase peniA (372 aa).

Mg(2+) is bound by residues D116, E121, N263, S267, and E271. The DDXXE motif motif lies at 116–121 (DDQFDE).

The protein belongs to the terpene synthase family. Mg(2+) serves as cofactor.

The enzyme catalyses (2E,6E)-farnesyl diphosphate = silphinene + diphosphate. The protein operates within secondary metabolite biosynthesis; terpenoid biosynthesis. In terms of biological role, sesquiterpene cyclase; part of the gene cluster that mediates the biosynthesis of penifulvin A, a potent insecticidal sesquiterpene that features a [5.5.5.6]dioxafenestrane ring. Within the pathway, peniA catalyzes the first step and generates the angular triquinane scaffold silphinene via cyclization of the linear farnesyl pyrophosphate (FPP). The cytochrome P450 monooxygenase peniB and the flavin-dependent monooxygenase peniC then catalyze a series of oxidation reactions to transform silphinene into penifulvin A. The polypeptide is Silphinene synthase peniA (Penicillium patulum (Penicillium griseofulvum)).